Reading from the N-terminus, the 609-residue chain is UvrABC system protein C (609 aa).

The region spanning 16-94 (SSPGVYRMYD…IKQYMPRYNV (79 aa)) is the GIY-YIG domain. Residues 203 to 238 (LQVMTELVSKMEASALALEYEQAASYRDQIAALRRV) enclose the UVR domain.

It belongs to the UvrC family. As to quaternary structure, interacts with UvrB in an incision complex.

It is found in the cytoplasm. Functionally, the UvrABC repair system catalyzes the recognition and processing of DNA lesions. UvrC both incises the 5' and 3' sides of the lesion. The N-terminal half is responsible for the 3' incision and the C-terminal half is responsible for the 5' incision. This is UvrABC system protein C from Shewanella sediminis (strain HAW-EB3).